Reading from the N-terminus, the 381-residue chain is Dynactin subunit 2 (381 aa).

The tract at residues 15–39 (DQPDVYETPDAPESETSDFYDEEPA) is disordered. Residues 24-39 (DAPESETSDFYDEEPA) are compositionally biased toward acidic residues. 2 coiled-coil regions span residues 100 to 216 (QKCL…AVGA) and 350 to 381 (GVQE…EKVK).

This sequence belongs to the dynactin subunit 2 family. Subunit of dynactin, a multiprotein complex associated with dynein.

It is found in the cytoplasm. It localises to the cytoskeleton. Its subcellular location is the membrane. Functionally, modulates cytoplasmic dynein binding to an organelle, and plays a role in prometaphase chromosome alignment and spindle organization during mitosis. The protein is Dynactin subunit 2 of Aedes aegypti (Yellowfever mosquito).